The primary structure comprises 506 residues: Dolichyl pyrophosphate Glc1Man9GlcNAc2 alpha-1,3-glucosyltransferase (506 aa).

12 helical membrane passes run 10-30 (RLLL…IPSS), 101-121 (VIYF…YGVY), 133-153 (NLIC…HIHF), 176-196 (LLGG…AVTA), 219-239 (LVTI…PFIY), 261-281 (YWAP…AVLL), 305-325 (PFAV…LLAI), 339-359 (GLVA…GWHV), 384-401 (HYFL…PLLY), 406-426 (YPIK…GFAA), 454-474 (YLMG…YFLG), and 479-499 (FLPL…SWIW).

This sequence belongs to the ALG6/ALG8 glucosyltransferase family.

It is found in the endoplasmic reticulum membrane. The enzyme catalyses an alpha-D-Glc-(1-&gt;3)-alpha-D-Man-(1-&gt;2)-alpha-D-Man-(1-&gt;2)-alpha-D-Man-(1-&gt;3)-[alpha-D-Man-(1-&gt;2)-alpha-D-Man-(1-&gt;3)-[alpha-D-Man-(1-&gt;2)-alpha-D-Man-(1-&gt;6)]-alpha-D-Man-(1-&gt;6)]-beta-D-Man-(1-&gt;4)-beta-D-GlcNAc-(1-&gt;4)-alpha-D-GlcNAc-diphospho-di-trans,poly-cis-dolichol + a di-trans,poly-cis-dolichyl beta-D-glucosyl phosphate = an alpha-D-Glc-(1-&gt;3)-alpha-D-Glc-(1-&gt;3)-alpha-D-Man-(1-&gt;2)-alpha-D-Man-(1-&gt;2)-alpha-D-Man-(1-&gt;3)-[alpha-D-Man-(1-&gt;2)-alpha-D-Man-(1-&gt;3)-[alpha-D-Man-(1-&gt;2)-alpha-D-Man-(1-&gt;6)]-alpha-D-Man-(1-&gt;6)]-beta-D-Man-(1-&gt;4)-beta-D-GlcNAc-(1-&gt;4)-alpha-D-GlcNAc-diphospho-di-trans,poly-cis-dolichol + a di-trans,poly-cis-dolichyl phosphate + H(+). It participates in protein modification; protein glycosylation. Functionally, dolichyl pyrophosphate Glc1Man9GlcNAc2 alpha-1,3-glucosyltransferase that operates in the biosynthetic pathway of dolichol-linked oligosaccharides, the glycan precursors employed in protein asparagine (N)-glycosylation. The assembly of dolichol-linked oligosaccharides begins on the cytosolic side of the endoplasmic reticulum membrane and finishes in its lumen. The sequential addition of sugars to dolichol pyrophosphate produces dolichol-linked oligosaccharides containing fourteen sugars, including two GlcNAcs, nine mannoses and three glucoses. Once assembled, the oligosaccharide is transferred from the lipid to nascent proteins by oligosaccharyltransferases. In the lumen of the endoplasmic reticulum, adds the second glucose residue from dolichyl phosphate glucose (Dol-P-Glc) onto the lipid-linked oligosaccharide intermediate Glc(1)Man(9)GlcNAc(2)-PP-Dol to produce Glc(2)Man(9)GlcNAc(2)-PP-Dol. The sequence is that of Dolichyl pyrophosphate Glc1Man9GlcNAc2 alpha-1,3-glucosyltransferase from Arabidopsis thaliana (Mouse-ear cress).